A 505-amino-acid chain; its full sequence is N-succinylglutamate 5-semialdehyde dehydrogenase (505 aa).

Residue 234–239 (GSAHTG) coordinates NAD(+). Active-site residues include Glu-257 and Cys-291.

It belongs to the aldehyde dehydrogenase family. AstD subfamily.

It catalyses the reaction N-succinyl-L-glutamate 5-semialdehyde + NAD(+) + H2O = N-succinyl-L-glutamate + NADH + 2 H(+). It functions in the pathway amino-acid degradation; L-arginine degradation via AST pathway; L-glutamate and succinate from L-arginine: step 4/5. In terms of biological role, catalyzes the NAD-dependent reduction of succinylglutamate semialdehyde into succinylglutamate. This Yersinia pestis bv. Antiqua (strain Antiqua) protein is N-succinylglutamate 5-semialdehyde dehydrogenase.